Consider the following 114-residue polypeptide: Protein U68 (114 aa).

Belongs to the herpesviridae UL96 family.

This Human herpesvirus 6A (strain Uganda-1102) (HHV-6 variant A) protein is Protein U68 (U68).